The sequence spans 873 residues: MTDSDEDALKVDQGPSRDIPKPWVIPAPKGILQHIFGTSHVFQSICDVKPKVTGLTVPLKVREYYSRGQQCLEQADWETAVLLFSRALHLDPQLVDFYALRAEAYLQLCDFSSAAQNLRRAYSLQQDNCKHLERLTFVLYLQGQCLFEQCAFLDALNVFSHAAELQPEKPCFRYRCMACLLALKQHQACLTLITNELKQDTTNADVYIFRARLYNFLQKPHLCYRDLHSALLLNPKHPQARMLLQKMVAQAQQARQDAGILAVQGKLQHALQRINRAIENNPLDPSLFLFRGTMYRRLQEFDGAVEDFLKVLDMVTEDQEDMVRQAQRQLLLTYNDFAVHCYRQGAYQEGVLLLNKALRDEQQEKGLYINRGDCFFQLGNLAFAEADYQQALALSPQDEGANTRMGLLQEKMGFCEQRRKQFQKAENHFSTAIRHNPQKAQYYLYRAKSRQLLQNIFGARQDVATVLLLNPKQPKLSLLMTNLFPGMSVEEVLSTQIAHLARLQLEQMVEGSLQAGSPQGIVGMLKRHELERQKALALQHSWKQGEPLIATSEELKATPEIPQVKPGSSEGEAEAPEEEEEKEKEKKEEKKSELIPSKVASLSDSYLDQTSSASSMSFRTTGTSETEMSAICQEYRSTSATAVTFSDSSLLKTQSSDSGNNREALSHGPRKIKATQGQRQSLSKTEPTQSQRRNSSKTKATIHKRNSSKTKATQSQRRNSSKTRATQGQGQSSSKTEATQGQRQSSSEIEATQGPRQEPSKTKTTRSPRQRPRKVKAARGRSWRPSKVDATQGRSRGLLRSSTKTEAFYDSNWSLSKTEYAQGQGQRSSKAEGAQGKSQGMSSTSSKAESTWGPSPSLSKTEVDQDLTYYEAV.

Positions 1 to 20 (MTDSDEDALKVDQGPSRDIP) are disordered. TPR repeat units lie at residues 61–94 (VREYYSRGQQCLEQADWETAVLLFSRALHLDPQL), 96–128 (DFYALRAEAYLQLCDFSSAAQNLRRAYSLQQDN), 136–169 (TFVLYLQGQCLFEQCAFLDALNVFSHAAELQPEK), 251–284 (AQQARQDAGILAVQGKLQHALQRINRAIENNPLD), 285–318 (PSLFLFRGTMYRRLQEFDGAVEDFLKVLDMVTED), 331–364 (LLTYNDFAVHCYRQGAYQEGVLLLNKALRDEQQE), 365–398 (KGLYINRGDCFFQLGNLAFAEADYQQALALSPQD), and 406–439 (GLLQEKMGFCEQRRKQFQKAENHFSTAIRHNPQK). Disordered stretches follow at residues 553–626 (EELK…TSET) and 639–873 (SATA…YEAV). A compositionally biased stretch (acidic residues) spans 571–582 (GEAEAPEEEEEK). A compositionally biased stretch (basic and acidic residues) spans 583–593 (EKEKKEEKKSE). Polar residues-rich tracts occupy residues 600-626 (ASLSDSYLDQTSSASSMSFRTTGTSET), 639-663 (SATAVTFSDSSLLKTQSSDSGNNRE), and 675-693 (TQGQRQSLSKTEPTQSQRR). Residues 694 to 708 (NSSKTKATIHKRNSS) are compositionally biased toward basic residues. The span at 709-750 (KTKATQSQRRNSSKTRATQGQGQSSSKTEATQGQRQSSSEIE) shows a compositional bias: polar residues. Positions 763-784 (KTTRSPRQRPRKVKAARGRSWR) are enriched in basic residues. Polar residues-rich tracts occupy residues 800–828 (RSSTKTEAFYDSNWSLSKTEYAQGQGQRS) and 836–860 (GKSQGMSSTSSKAESTWGPSPSLSK).

The chain is Tetratricopeptide repeat protein 16 (TTC16) from Homo sapiens (Human).